We begin with the raw amino-acid sequence, 367 residues long: 3-dehydroquinate synthase (367 aa).

NAD(+) is bound by residues 69-74, 103-107, 127-128, K140, K149, and 167-170; these read DGEAFK, GVVGD, TT, and TLAT. E182, H245, and H262 together coordinate Zn(2+).

The protein belongs to the sugar phosphate cyclases superfamily. Dehydroquinate synthase family. It depends on Co(2+) as a cofactor. Requires Zn(2+) as cofactor. NAD(+) serves as cofactor.

It localises to the cytoplasm. The enzyme catalyses 7-phospho-2-dehydro-3-deoxy-D-arabino-heptonate = 3-dehydroquinate + phosphate. Its pathway is metabolic intermediate biosynthesis; chorismate biosynthesis; chorismate from D-erythrose 4-phosphate and phosphoenolpyruvate: step 2/7. Catalyzes the conversion of 3-deoxy-D-arabino-heptulosonate 7-phosphate (DAHP) to dehydroquinate (DHQ). This chain is 3-dehydroquinate synthase, found in Azotobacter vinelandii (strain DJ / ATCC BAA-1303).